We begin with the raw amino-acid sequence, 483 residues long: V-type proton ATPase subunit B 2 (483 aa).

This sequence belongs to the ATPase alpha/beta chains family. V-ATPase is a heteromultimeric enzyme composed of a peripheral catalytic V1 complex (main components: subunits A, B, C, D, E, and F) attached to an integral membrane V0 proton pore complex (main component: the proteolipid protein).

In terms of biological role, non-catalytic subunit of the peripheral V1 complex of vacuolar ATPase. V-ATPase is responsible for acidifying a variety of intracellular compartments in eukaryotic cells. The polypeptide is V-type proton ATPase subunit B 2 (Hordeum vulgare (Barley)).